Consider the following 137-residue polypeptide: Chaperone protein YscB (137 aa).

In terms of assembly, interacts with SycN to form a complex which specifically binds to YopN.

It is found in the cytoplasm. It localises to the cell inner membrane. Functionally, functions as a specific chaperone for YopN. It could facilitate the secretion and the subsequent translocation of YopN. The chain is Chaperone protein YscB (yscB) from Yersinia enterocolitica.